Reading from the N-terminus, the 211-residue chain is Calcipressin-like protein (211 aa).

A phosphoserine mark is found at Ser-113 and Ser-117. Position 182 is a phosphothreonine (Thr-182).

Belongs to the RCAN family.

In terms of biological role, inhibits calcineurin-dependent transcriptional responses by binding to the catalytic domain of calcineurin. The protein is Calcipressin-like protein (RCN1) of Saccharomyces cerevisiae (strain ATCC 204508 / S288c) (Baker's yeast).